The following is a 239-amino-acid chain: 2',3'-cyclic-nucleotide 3'-phosphodiesterase (239 aa).

Residues H39 and H150 each act as proton donor/acceptor in the active site.

Belongs to the 2H phosphoesterase superfamily. CPD1 family.

It localises to the golgi apparatus. It carries out the reaction ADP-alpha-D-ribose 1'',2''-cyclic phosphate + H2O = ADP-alpha-D-ribose 1''-phosphate + H(+). The enzyme catalyses 2',3'-cyclophospho-AMP + H2O = adenosine 2'-phosphate + H(+). It catalyses the reaction 2',3'-cyclophospho-GMP + H2O = guanosine 2'-phosphate + H(+). The catalysed reaction is 2',3'-cyclophospho-UMP + H2O = uridine 2'-phosphate + H(+). It carries out the reaction 2',3'-cyclophospho-CMP + H2O = cytidine 2'-phosphate + H(+). The enzyme catalyses a nucleoside 2',3'-cyclic phosphate + H2O = a nucleoside 2'-phosphate + H(+). Its function is as follows. Involved in the metabolism of ADP-ribose 1',2'-cyclic phosphate which is produced as a consequence of tRNA splicing. This is 2',3'-cyclic-nucleotide 3'-phosphodiesterase from Saccharomyces cerevisiae (strain ATCC 204508 / S288c) (Baker's yeast).